Here is a 228-residue protein sequence, read N- to C-terminus: Biosynthetic peptidoglycan transglycosylase (228 aa).

The helical transmembrane segment at 8 to 28 threads the bilayer; the sequence is GVAALLALFLLYQLWIFGHIV.

The protein belongs to the glycosyltransferase 51 family.

The protein localises to the cell inner membrane. It carries out the reaction [GlcNAc-(1-&gt;4)-Mur2Ac(oyl-L-Ala-gamma-D-Glu-L-Lys-D-Ala-D-Ala)](n)-di-trans,octa-cis-undecaprenyl diphosphate + beta-D-GlcNAc-(1-&gt;4)-Mur2Ac(oyl-L-Ala-gamma-D-Glu-L-Lys-D-Ala-D-Ala)-di-trans,octa-cis-undecaprenyl diphosphate = [GlcNAc-(1-&gt;4)-Mur2Ac(oyl-L-Ala-gamma-D-Glu-L-Lys-D-Ala-D-Ala)](n+1)-di-trans,octa-cis-undecaprenyl diphosphate + di-trans,octa-cis-undecaprenyl diphosphate + H(+). Its pathway is cell wall biogenesis; peptidoglycan biosynthesis. Peptidoglycan polymerase that catalyzes glycan chain elongation from lipid-linked precursors. The polypeptide is Biosynthetic peptidoglycan transglycosylase (Laribacter hongkongensis (strain HLHK9)).